The sequence spans 148 residues: F420H(2)-dependent quinone reductase MT1609 (148 aa).

Coenzyme F420-(gamma-Glu)n-binding positions include 46-48 (AKT), 52-57 (RKTPLM), 68-71 (VASL), 79-83 (VWYHN), and tyrosine 125.

Belongs to the F420H(2)-dependent quinone reductase family.

It localises to the cell membrane. It carries out the reaction oxidized coenzyme F420-(gamma-L-Glu)(n) + a quinol + H(+) = reduced coenzyme F420-(gamma-L-Glu)(n) + a quinone. Its function is as follows. Involved in a F420-dependent anti-oxidant mechanism that protects M.tuberculosis against oxidative stress and bactericidal agents. Catalyzes the F420H(2)-dependent two-electron reduction of quinones to dihydroquinones, thereby preventing the formation of cytotoxic semiquinones obtained by the one-electron reduction pathway. In vitro, catalyzes the reduction of menadione to menadiol; since menaquinone is the sole quinone electron carrier in the respiratory chain in M.tuberculosis, the physiological electron acceptor for Fqr-mediated F420H(2) oxidation is therefore likely to be the endogenous menaquinone found in the membrane fraction of M.tuberculosis. The protein is F420H(2)-dependent quinone reductase MT1609 of Mycobacterium tuberculosis (strain CDC 1551 / Oshkosh).